The chain runs to 291 residues: Putative heme-binding peroxidase (291 aa).

Histidine 61 serves as the catalytic Proton acceptor. Position 185 (histidine 185) interacts with heme b. Tryptophan 201 (tryptophan radical intermediate) is an active-site residue.

This sequence belongs to the peroxidase family. Cytochrome c peroxidase subfamily. Requires heme b as cofactor.

Functionally, destroys radicals which are normally produced within the cells and which are toxic to biological systems. The sequence is that of Putative heme-binding peroxidase (CCP2) from Candida albicans (strain SC5314 / ATCC MYA-2876) (Yeast).